The primary structure comprises 527 residues: TnpB-like protein R854 (527 aa).

The segment covering 21–36 has biased composition (basic residues); that stretch reads GSKTKKKVFVKKKPPA. The tract at residues 21-50 is disordered; sequence GSKTKKKVFVKKKPPAKKPPDKKPLKKTTK. The Zn(2+) site is built by cysteine 481, cysteine 484, cysteine 498, and cysteine 501.

The protein in the central section; belongs to the transposase 2 family. It in the C-terminal section; belongs to the transposase 35 family.

This chain is TnpB-like protein R854, found in Acanthamoeba polyphaga mimivirus (APMV).